The following is a 213-amino-acid chain: StAR-related lipid transfer protein 5 (213 aa).

The START domain maps to 1–213 (MDLATAAQVS…LEKAVKKFFG (213 aa)).

In terms of biological role, may be involved in the intracellular transport of sterols or other lipids. May bind cholesterol or other sterols. In Bos taurus (Bovine), this protein is StAR-related lipid transfer protein 5 (STARD5).